Here is a 545-residue protein sequence, read N- to C-terminus: CTP synthase (545 aa).

The segment at 1-266 is amidoligase domain; sequence MTTNYIFVTG…DDYICKRFSL (266 aa). Serine 14 is a CTP binding site. Serine 14 lines the UTP pocket. ATP contacts are provided by residues 15-20 and aspartate 72; that span reads SLGKGI. The Mg(2+) site is built by aspartate 72 and glutamate 140. CTP contacts are provided by residues 147 to 149, 187 to 192, and lysine 223; these read DIE and KTKPTQ. Residues 187-192 and lysine 223 contribute to the UTP site; that span reads KTKPTQ. 239-241 lines the ATP pocket; it reads KDV. Residues 291–542 enclose the Glutamine amidotransferase type-1 domain; that stretch reads TIGMVGKYIE…VKAASEYQKR (252 aa). Residue glycine 352 participates in L-glutamine binding. Residue cysteine 379 is the Nucleophile; for glutamine hydrolysis of the active site. L-glutamine contacts are provided by residues 380-383, glutamate 403, and arginine 470; that span reads LGMQ. Residues histidine 515 and glutamate 517 contribute to the active site.

It belongs to the CTP synthase family. As to quaternary structure, homotetramer.

It catalyses the reaction UTP + L-glutamine + ATP + H2O = CTP + L-glutamate + ADP + phosphate + 2 H(+). It carries out the reaction L-glutamine + H2O = L-glutamate + NH4(+). The catalysed reaction is UTP + NH4(+) + ATP = CTP + ADP + phosphate + 2 H(+). The protein operates within pyrimidine metabolism; CTP biosynthesis via de novo pathway; CTP from UDP: step 2/2. Its activity is regulated as follows. Allosterically activated by GTP, when glutamine is the substrate; GTP has no effect on the reaction when ammonia is the substrate. The allosteric effector GTP functions by stabilizing the protein conformation that binds the tetrahedral intermediate(s) formed during glutamine hydrolysis. Inhibited by the product CTP, via allosteric rather than competitive inhibition. Its function is as follows. Catalyzes the ATP-dependent amination of UTP to CTP with either L-glutamine or ammonia as the source of nitrogen. Regulates intracellular CTP levels through interactions with the four ribonucleotide triphosphates. This Cronobacter sakazakii (strain ATCC BAA-894) (Enterobacter sakazakii) protein is CTP synthase.